The following is a 70-amino-acid chain: NADH dehydrogenase [ubiquinone] 1 alpha subcomplex subunit 1 (70 aa).

A helical membrane pass occupies residues 1–21 (MWFEILPGLSVMGVCLLIPGL).

Belongs to the complex I NDUFA1 subunit family. Complex I is composed of 45 different subunits. As to expression, primarily expressed in heart and skeletal muscle.

Its subcellular location is the mitochondrion inner membrane. In terms of biological role, accessory subunit of the mitochondrial membrane respiratory chain NADH dehydrogenase (Complex I), that is believed not to be involved in catalysis. Complex I functions in the transfer of electrons from NADH to the respiratory chain. The immediate electron acceptor for the enzyme is believed to be ubiquinone. This chain is NADH dehydrogenase [ubiquinone] 1 alpha subcomplex subunit 1 (NDUFA1), found in Homo sapiens (Human).